Reading from the N-terminus, the 116-residue chain is MASMKVVCVALIMCIVIAPMAESAITCGRVDTALAPCLGYLQGGPGPSAQCCGGVRNLNSAAVTTPDRQAACNCLKSAAGSISRLNANNAAALPGKCVVNIPYKISTSTNCATIRV.

A signal peptide spans 1-23 (MASMKVVCVALIMCIVIAPMAES). 4 disulfide bridges follow: Cys-27-Cys-74, Cys-37-Cys-51, Cys-52-Cys-97, and Cys-72-Cys-111.

Belongs to the plant LTP family.

Plant non-specific lipid-transfer proteins transfer phospholipids as well as galactolipids across membranes. May play a role in wax or cutin deposition in the cell walls of expanding epidermal cells and certain secretory tissues. This is Non-specific lipid-transfer protein from Cicer arietinum (Chickpea).